A 252-amino-acid chain; its full sequence is Probable oligoribonuclease (252 aa).

One can recognise an Exonuclease domain in the interval 81 to 241 (VWIDCEMTGL…ALSDILESIG (161 aa)). Y202 is an active-site residue.

This sequence belongs to the oligoribonuclease family.

It is found in the cytoplasm. It localises to the nucleus. Its function is as follows. 3'-to-5' exoribonuclease specific for small oligoribonucleotides. The chain is Probable oligoribonuclease (rex2) from Schizosaccharomyces pombe (strain 972 / ATCC 24843) (Fission yeast).